Here is a 386-residue protein sequence, read N- to C-terminus: Protein phosphatase methylesterase 1 (386 aa).

The segment at 1–38 (MSALEKSMHLGRLPSRPPLPGSGGSQSGAKMRMGPGRK) is disordered. S15 is modified (phosphoserine). R16 carries the asymmetric dimethylarginine; alternate modification. At R16 the chain carries Omega-N-methylarginine; alternate. A Phosphoserine modification is found at S42. The active site involves S156. Over residues 254 to 265 (IIEEEEEDEEGS) the composition is skewed to acidic residues. Residues 254–280 (IIEEEEEDEEGSESISKRKKEDDMETK) form a disordered region. The span at 268 to 280 (ISKRKKEDDMETK) shows a compositional bias: basic and acidic residues. The active site involves H349.

This sequence belongs to the AB hydrolase superfamily. As to quaternary structure, binds PPP2CA and PPP2CB. Post-translationally, phosphorylated by SIK1 following increases in intracellular sodium, leading to dissociation from the protein phosphatase 2A (PP2A) complex and subsequent dephosphorylation of sodium/potassium-transporting ATPase ATP1A1.

The enzyme catalyses [phosphatase 2A protein]-C-terminal L-leucine methyl ester + H2O = [phosphatase 2A protein]-C-terminal L-leucine + methanol + H(+). Functionally, demethylates proteins that have been reversibly carboxymethylated. Demethylates PPP2CB (in vitro) and PPP2CA. Binding to PPP2CA displaces the manganese ion and inactivates the enzyme. This Pongo abelii (Sumatran orangutan) protein is Protein phosphatase methylesterase 1 (PPME1).